A 523-amino-acid polypeptide reads, in one-letter code: Ribonuclease Y (523 aa).

A helical transmembrane segment spans residues 18–38 (WSLTVALVIGGALGFLVVWAF). The 64-residue stretch at 213–276 (TSTIVSLPNE…EVARGALEAL (64 aa)) folds into the KH domain. The HD domain occupies 339–432 (VLDHSVETAS…VILADTISAT (94 aa)).

This sequence belongs to the RNase Y family.

Its subcellular location is the cell membrane. Functionally, endoribonuclease that initiates mRNA decay. This Opitutus terrae (strain DSM 11246 / JCM 15787 / PB90-1) protein is Ribonuclease Y.